The sequence spans 110 residues: Protein YcgL (110 aa).

The region spanning 14-98 (MFCVIYRSSK…PPEDLLKQHL (85 aa)) is the YcgL domain. The interval 88 to 110 (PPPEDLLKQHLSSVGQNTSHADR) is disordered. The span at 97-110 (HLSSVGQNTSHADR) shows a compositional bias: polar residues.

The protein is Protein YcgL of Salmonella typhi.